A 449-amino-acid chain; its full sequence is G-protein coupled receptor 61 (449 aa).

Low complexity predominate over residues 1–14 (MESSPIPQSSGNSS). Residues 1 to 29 (MESSPIPQSSGNSSTLGRALQTPGPSTAS) are disordered. Topologically, residues 1–44 (MESSPIPQSSGNSSTLGRALQTPGPSTASGVPELGLRDVASESV) are extracellular. Asparagine 12 carries an N-linked (GlcNAc...) asparagine glycan. Residues 45–67 (ALFFMLLLDLTAVAGNAAVMAVI) form a helical membrane-spanning segment. Residues 68-75 (AKTPALRK) are Cytoplasmic-facing. Residues 76-98 (FVFVFHLCLVDLLAALTLMPLAM) form a helical membrane-spanning segment. The Extracellular segment spans residues 99 to 112 (LSSSALFDHALFGE). A helical membrane pass occupies residues 113 to 135 (VACRLYLFLSVCFVSLAILSVSA). Residues 136-155 (INVERYYYVVHPMRYEVRMT) are Cytoplasmic-facing. A helical membrane pass occupies residues 156-178 (LGLVASVLVGVWVKALAMASVPV). Residues 179–206 (LGRVYWEEGAPSVNPGCSLQWSHSAYCQ) are Extracellular-facing. Residues 207–229 (LFVVVFAVLYFLLPLILIFVVYC) form a helical membrane-spanning segment. The Cytoplasmic segment spans residues 230–287 (SMFRVARVAAMQHGPLPTWMETPRQRSESLSSRSTMVTSSGAHQTTPHRTFGGGKAAV). The helical transmembrane segment at 288–310 (VLLAVGGQFLLCWLPYFSFHLYV) threads the bilayer. The Extracellular portion of the chain corresponds to 311 to 324 (ALSAQPISAGQVEN). The chain crosses the membrane as a helical span at residues 325-344 (VVTWIGYFCFTSNPFFYGCL). Topologically, residues 345-449 (NRQIRGELSK…RPAPSPRLES (105 aa)) are cytoplasmic.

This sequence belongs to the G-protein coupled receptor 1 family. As to quaternary structure, forms heterodimer with MTNR1B. Interacts with ARRB1 and ARRB2 in a spontaneous and agonist-independent manner; leading to the internalization of GPR61 in the endosomal compartment. In terms of tissue distribution, predominantly expressed in the brain and testes, with relatively lower expression observed in the eye, adrenal gland and pituitary gland.

The protein localises to the cell membrane. The protein resides in the endosome membrane. Its function is as follows. Orphan G-protein coupled receptor. Constitutively activates the G(s)-alpha/cAMP signaling pathway. Shows a reciprocal regulatory interaction with the melatonin receptor MTNR1B most likely through receptor heteromerization. May be involved in the regulation of food intake and body weight. The protein is G-protein coupled receptor 61 (Gpr61) of Mus musculus (Mouse).